Here is a 177-residue protein sequence, read N- to C-terminus: MSRVGKKPVTVPSGVTASVEGQTVKMKGPKGQLHFVVHDDVDVKFEDGSVKVAPRFETNRAQALYGTARAQIANLVEGVTKGFEKKLEITGVGYRAALQGKKLQLALGYSHDVIYDIPEGITITVPKPTEINVVGIDSQKVGQVAAEIRDYRPPEPYKGKGVRYSDEFIFRKEGKKK.

It belongs to the universal ribosomal protein uL6 family. In terms of assembly, part of the 50S ribosomal subunit.

Its function is as follows. This protein binds to the 23S rRNA, and is important in its secondary structure. It is located near the subunit interface in the base of the L7/L12 stalk, and near the tRNA binding site of the peptidyltransferase center. This Rhodopseudomonas palustris (strain HaA2) protein is Large ribosomal subunit protein uL6.